The sequence spans 356 residues: UDP-N-acetylglucosamine--N-acetylmuramyl-(pentapeptide) pyrophosphoryl-undecaprenol N-acetylglucosamine transferase (356 aa).

Residues 12-14, Asn-124, Arg-163, Ser-188, Ile-242, 261-266, and Gln-287 contribute to the UDP-N-acetyl-alpha-D-glucosamine site; these read TGG and ALTVCE.

Belongs to the glycosyltransferase 28 family. MurG subfamily.

Its subcellular location is the cell inner membrane. It catalyses the reaction di-trans,octa-cis-undecaprenyl diphospho-N-acetyl-alpha-D-muramoyl-L-alanyl-D-glutamyl-meso-2,6-diaminopimeloyl-D-alanyl-D-alanine + UDP-N-acetyl-alpha-D-glucosamine = di-trans,octa-cis-undecaprenyl diphospho-[N-acetyl-alpha-D-glucosaminyl-(1-&gt;4)]-N-acetyl-alpha-D-muramoyl-L-alanyl-D-glutamyl-meso-2,6-diaminopimeloyl-D-alanyl-D-alanine + UDP + H(+). Its pathway is cell wall biogenesis; peptidoglycan biosynthesis. Cell wall formation. Catalyzes the transfer of a GlcNAc subunit on undecaprenyl-pyrophosphoryl-MurNAc-pentapeptide (lipid intermediate I) to form undecaprenyl-pyrophosphoryl-MurNAc-(pentapeptide)GlcNAc (lipid intermediate II). In Stutzerimonas stutzeri (strain A1501) (Pseudomonas stutzeri), this protein is UDP-N-acetylglucosamine--N-acetylmuramyl-(pentapeptide) pyrophosphoryl-undecaprenol N-acetylglucosamine transferase.